A 206-amino-acid chain; its full sequence is Thymidylate kinase (206 aa).

ATP is bound at residue 14-21 (GGEGIGKS).

Belongs to the thymidylate kinase family.

The catalysed reaction is dTMP + ATP = dTDP + ADP. Functionally, phosphorylation of dTMP to form dTDP in both de novo and salvage pathways of dTTP synthesis. This Rickettsia bellii (strain OSU 85-389) protein is Thymidylate kinase.